The chain runs to 75 residues: UPF0291 protein LMOf2365_1322 (75 aa).

The tract at residues 56–75 is disordered; the sequence is DPNGTDVTPHKVKQLRKNKH. Positions 65-75 are enriched in basic residues; sequence HKVKQLRKNKH.

This sequence belongs to the UPF0291 family.

The protein localises to the cytoplasm. The protein is UPF0291 protein LMOf2365_1322 of Listeria monocytogenes serotype 4b (strain F2365).